The primary structure comprises 107 residues: Nucleoid-associated protein GOX0603 (107 aa).

It belongs to the YbaB/EbfC family. As to quaternary structure, homodimer.

It is found in the cytoplasm. The protein resides in the nucleoid. Binds to DNA and alters its conformation. May be involved in regulation of gene expression, nucleoid organization and DNA protection. This Gluconobacter oxydans (strain 621H) (Gluconobacter suboxydans) protein is Nucleoid-associated protein GOX0603.